Consider the following 151-residue polypeptide: Immunity protein YezG (151 aa).

Residues Lys-62 to Val-90 are a coiled coil.

As to quaternary structure, interacts with cognate toxin YeeF but not with non-cognate toxin YobL. The interaction probably inhibits the toxic activity of YeeF. May bind with a stoichiometry of 2:2 to YeeF.

The protein resides in the cytoplasm. In terms of biological role, immunity component of one of 6 LXG toxin-immunity modules in this strain. They promote kin selection, mediate competition in biofilms, and drive spatial segregation of different strains, indicating that LXG toxins may help avoid warfare between strains in biofilms. Mediates intercellular competition during biofilm formation; disruption of the operon disadvantages the bacteria, but overexpression of the cognate immunity protein restores growth in competition with wild-type. In situ neutralizes the toxic effect of cognate toxin YeeF. Probably neutralizes the ability to inhibit growth of cognate toxin YeeF. Probably does not have immunity protein activity on other LXG toxins. This is Immunity protein YezG (yezG) from Bacillus subtilis (strain 168).